The sequence spans 381 residues: Alkanesulfonate monooxygenase (381 aa).

Belongs to the SsuD family. As to quaternary structure, homotetramer.

The enzyme catalyses an alkanesulfonate + FMNH2 + O2 = an aldehyde + FMN + sulfite + H2O + 2 H(+). In terms of biological role, catalyzes the desulfonation of aliphatic sulfonates. The chain is Alkanesulfonate monooxygenase from Shigella flexneri serotype 5b (strain 8401).